The following is a 306-amino-acid chain: Bifunctional protein FolD (306 aa).

Residues 166 to 168 (GRS) and I232 each bind NADP(+).

Belongs to the tetrahydrofolate dehydrogenase/cyclohydrolase family. As to quaternary structure, homodimer.

It carries out the reaction (6R)-5,10-methylene-5,6,7,8-tetrahydrofolate + NADP(+) = (6R)-5,10-methenyltetrahydrofolate + NADPH. The enzyme catalyses (6R)-5,10-methenyltetrahydrofolate + H2O = (6R)-10-formyltetrahydrofolate + H(+). Its pathway is one-carbon metabolism; tetrahydrofolate interconversion. Its function is as follows. Catalyzes the oxidation of 5,10-methylenetetrahydrofolate to 5,10-methenyltetrahydrofolate and then the hydrolysis of 5,10-methenyltetrahydrofolate to 10-formyltetrahydrofolate. The sequence is that of Bifunctional protein FolD from Methylorubrum extorquens (strain CM4 / NCIMB 13688) (Methylobacterium extorquens).